The chain runs to 237 residues: Ribose-5-phosphate isomerase A (237 aa).

Substrate-binding positions include 30 to 33, 87 to 90, and 100 to 103; these read SGST, DGAD, and KGGG. Glu109 (proton acceptor) is an active-site residue. Position 127 (Lys127) interacts with substrate.

This sequence belongs to the ribose 5-phosphate isomerase family. As to quaternary structure, homodimer.

It catalyses the reaction aldehydo-D-ribose 5-phosphate = D-ribulose 5-phosphate. It functions in the pathway carbohydrate degradation; pentose phosphate pathway; D-ribose 5-phosphate from D-ribulose 5-phosphate (non-oxidative stage): step 1/1. Catalyzes the reversible conversion of ribose-5-phosphate to ribulose 5-phosphate. The sequence is that of Ribose-5-phosphate isomerase A from Synechococcus sp. (strain RCC307).